The primary structure comprises 422 residues: BTB/POZ domain-containing protein KCTD18 (422 aa).

Residues 12–80 form the BTB domain; that stretch reads DILRLNVGGC…YLHGEVHIPT (69 aa). 2 disordered regions span residues 289 to 357 and 376 to 422; these read VKNS…THLP and LRRT…DQTK. Positions 396–406 are enriched in pro residues; the sequence is PAGPPEPPPDA. Residues 413–422 show a composition bias toward polar residues; that stretch reads WTENGQDQTK.

This is BTB/POZ domain-containing protein KCTD18 (KCTD18) from Bos taurus (Bovine).